The following is a 489-amino-acid chain: Cobyric acid synthase (489 aa).

The region spanning 247-439 (ALKVVVPVLP…IHGVFDEPAA (193 aa)) is the GATase cobBQ-type domain. Cysteine 328 (nucleophile) is an active-site residue. Histidine 431 is an active-site residue.

Belongs to the CobB/CobQ family. CobQ subfamily.

It functions in the pathway cofactor biosynthesis; adenosylcobalamin biosynthesis. Catalyzes amidations at positions B, D, E, and G on adenosylcobyrinic A,C-diamide. NH(2) groups are provided by glutamine, and one molecule of ATP is hydrogenolyzed for each amidation. The sequence is that of Cobyric acid synthase from Marinobacter nauticus (strain ATCC 700491 / DSM 11845 / VT8) (Marinobacter aquaeolei).